A 301-amino-acid polypeptide reads, in one-letter code: Mycothiol acetyltransferase (301 aa).

2 consecutive N-acetyltransferase domains span residues 6–151 (EWRQ…ILRD) and 153–301 (VSLR…QYGR). 79–81 (LFV) serves as a coordination point for acetyl-CoA. Positions 180, 219, and 235 each coordinate 1D-myo-inositol 2-(L-cysteinylamino)-2-deoxy-alpha-D-glucopyranoside. Residues 239–241 (VGV) and 246–252 (QGGGLGR) contribute to the acetyl-CoA site. Tyr273 contacts 1D-myo-inositol 2-(L-cysteinylamino)-2-deoxy-alpha-D-glucopyranoside.

This sequence belongs to the acetyltransferase family. MshD subfamily. In terms of assembly, monomer.

The catalysed reaction is 1D-myo-inositol 2-(L-cysteinylamino)-2-deoxy-alpha-D-glucopyranoside + acetyl-CoA = mycothiol + CoA + H(+). Its function is as follows. Catalyzes the transfer of acetyl from acetyl-CoA to desacetylmycothiol (Cys-GlcN-Ins) to form mycothiol. This chain is Mycothiol acetyltransferase, found in Amycolatopsis mediterranei (strain U-32).